The following is a 370-amino-acid chain: Divinyl chlorophyll a/b light-harvesting protein PcbD (370 aa).

The next 6 membrane-spanning stretches (helical) occupy residues 27–47 (FIASHIGHTGLIAFAAGGSTL), 88–108 (VAAVAIVHLVLSMVYGGGALL), 140–160 (FILGHHLFFFGMACIAFVEWA), 201–221 (VMGGHAFLAFAELTGATIHMV), 248–268 (AVLSWSLAGIGWMAIVAAFWA), and 315–335 (LVNVHYYFGFFFLQGHFWHAL).

This sequence belongs to the PsbB/PsbC family. IsiA/Pcb subfamily. The antenna complex consists of divinyl chlorophylls (a and b) and divinyl chlorophyll a/b binding proteins and binds more divinyl chlorophyll b than does the antenna complex from high-light-adapted Prochlorococcus. Divinyl chlorophyll a is required as a cofactor. Divinyl chlorophyll b serves as cofactor.

It is found in the cellular thylakoid membrane. Its function is as follows. The antenna complex functions as a light receptor, it captures and delivers excitation energy to photosystems II and I. The Prochlorales pcb genes are not related to higher plant LHCs. The chain is Divinyl chlorophyll a/b light-harvesting protein PcbD (pcbD) from Prochlorococcus marinus (strain NATL2A).